A 196-amino-acid chain; its full sequence is Imidazoleglycerol-phosphate dehydratase (196 aa).

Belongs to the imidazoleglycerol-phosphate dehydratase family.

It localises to the cytoplasm. It carries out the reaction D-erythro-1-(imidazol-4-yl)glycerol 3-phosphate = 3-(imidazol-4-yl)-2-oxopropyl phosphate + H2O. The protein operates within amino-acid biosynthesis; L-histidine biosynthesis; L-histidine from 5-phospho-alpha-D-ribose 1-diphosphate: step 6/9. This is Imidazoleglycerol-phosphate dehydratase from Halobacterium salinarum (strain ATCC 700922 / JCM 11081 / NRC-1) (Halobacterium halobium).